The following is a 206-amino-acid chain: Small ribosomal subunit protein uS4 (206 aa).

The disordered stretch occupies residues 28-48; it reads YMERRPYGPGEHGRARKKQDS. Residues 95-160 form the S4 RNA-binding domain; the sequence is MRLDALVLRA…MPPFQVAAAG (66 aa).

The protein belongs to the universal ribosomal protein uS4 family. Part of the 30S ribosomal subunit. Contacts protein S5. The interaction surface between S4 and S5 is involved in control of translational fidelity.

Its function is as follows. One of the primary rRNA binding proteins, it binds directly to 16S rRNA where it nucleates assembly of the body of the 30S subunit. In terms of biological role, with S5 and S12 plays an important role in translational accuracy. In Paenarthrobacter aurescens (strain TC1), this protein is Small ribosomal subunit protein uS4.